A 306-amino-acid polypeptide reads, in one-letter code: Acetyl-coenzyme A carboxylase carboxyl transferase subunit beta (306 aa).

The 270-residue stretch at 25–294 (LWIKDPTSGE…AVNPSNPSPT (270 aa)) folds into the CoA carboxyltransferase N-terminal domain. Residues 286-306 (VNPSNPSPTDSQPPLSKAEAA) are disordered. Residues 287-299 (NPSNPSPTDSQPP) are compositionally biased toward polar residues.

The protein belongs to the AccD/PCCB family. Acetyl-CoA carboxylase is a heterohexamer composed of biotin carboxyl carrier protein (AccB), biotin carboxylase (AccC) and two subunits each of ACCase subunit alpha (AccA) and ACCase subunit beta (AccD).

It localises to the cytoplasm. It catalyses the reaction N(6)-carboxybiotinyl-L-lysyl-[protein] + acetyl-CoA = N(6)-biotinyl-L-lysyl-[protein] + malonyl-CoA. It participates in lipid metabolism; malonyl-CoA biosynthesis; malonyl-CoA from acetyl-CoA: step 1/1. In terms of biological role, component of the acetyl coenzyme A carboxylase (ACC) complex. Biotin carboxylase (BC) catalyzes the carboxylation of biotin on its carrier protein (BCCP) and then the CO(2) group is transferred by the transcarboxylase to acetyl-CoA to form malonyl-CoA. The chain is Acetyl-coenzyme A carboxylase carboxyl transferase subunit beta from Bartonella quintana (strain Toulouse) (Rochalimaea quintana).